Here is a 322-residue protein sequence, read N- to C-terminus: Major serine/threonine-protein phosphatase PP2A-2 catalytic subunit (322 aa).

Mn(2+) contacts are provided by aspartate 70, histidine 72, aspartate 98, and asparagine 130. Histidine 131 (proton donor) is an active-site residue. Mn(2+)-binding residues include histidine 180 and histidine 254. Residue leucine 322 is modified to Leucine methyl ester.

The protein belongs to the PPP phosphatase family. PP-2A subfamily. The cofactor is Mn(2+).

It catalyses the reaction O-phospho-L-seryl-[protein] + H2O = L-seryl-[protein] + phosphate. The enzyme catalyses O-phospho-L-threonyl-[protein] + H2O = L-threonyl-[protein] + phosphate. In terms of biological role, essential role in cell cycle control. PP2A may be involved in controlling the entry into mitosis, possibly acting as an inhibitor. The protein is Major serine/threonine-protein phosphatase PP2A-2 catalytic subunit (ppa2) of Schizosaccharomyces pombe (strain 972 / ATCC 24843) (Fission yeast).